The primary structure comprises 372 residues: Alanine dehydrogenase 1 (372 aa).

The active site involves histidine 94. Residue 170-200 (TYVIFGGGVAATNAANVALGLNAKVIIIELN) coordinates NAD(+).

Belongs to the AlaDH/PNT family.

The enzyme catalyses L-alanine + NAD(+) + H2O = pyruvate + NH4(+) + NADH + H(+). The protein operates within amino-acid degradation; L-alanine degradation via dehydrogenase pathway; NH(3) and pyruvate from L-alanine: step 1/1. May play a role in cell wall synthesis as L-alanine is an important constituent of the peptidoglycan layer. In Staphylococcus aureus (strain bovine RF122 / ET3-1), this protein is Alanine dehydrogenase 1 (ald1).